We begin with the raw amino-acid sequence, 226 residues long: MFTLLITGTDTDAGKTVLTTALAAYWRTYFPSQSVALLKPLQSGVGDRELYRELFALNQPPEEINPLYFQAPLAPPLAAELEQRSIDLSLPWQTLVKLRQSYDRVLVEGVGGLGSPITWELTVADLARDWGLATLLVVPVKLGAIGQAVANVALARQAGVNLKGIVLNCVQPRSETEIAQWAPADLITNLTQIPVLGVLPYLGDRTNLAQLAAAAAQLDLEAFLSA.

12–17 lines the ATP pocket; the sequence is DAGKTV. Thr16 lines the Mg(2+) pocket. Lys39 is an active-site residue. Ser43 lines the substrate pocket. ATP contacts are provided by residues Asp47, 108–111, 168–169, 200–202, and Asn207; these read EGVG, NC, and PYL. Mg(2+) is bound by residues Asp47 and Glu108.

It belongs to the dethiobiotin synthetase family. As to quaternary structure, homodimer. It depends on Mg(2+) as a cofactor.

Its subcellular location is the cytoplasm. It carries out the reaction (7R,8S)-7,8-diammoniononanoate + CO2 + ATP = (4R,5S)-dethiobiotin + ADP + phosphate + 3 H(+). The enzyme catalyses (7R,8S)-8-amino-7-(carboxyamino)nonanoate + ATP = (4R,5S)-dethiobiotin + ADP + phosphate + H(+). It participates in cofactor biosynthesis; biotin biosynthesis; biotin from 7,8-diaminononanoate: step 1/2. Its function is as follows. Catalyzes a mechanistically unusual reaction, the ATP-dependent insertion of CO2 between the N7 and N8 nitrogen atoms of 7,8-diaminopelargonic acid (DAPA, also called 7,8-diammoniononanoate) to form a ureido ring. This cyanobacterium does not encode bioA (which catalyzes the formation of the precursor for this reaction in the cannonical pathway), instead it encodes bioU, which replaces bioA and also performs the first half of the cannonical BioD reaction. Thus in this organism BioD has a different substrate. The sequence is that of ATP-dependent dethiobiotin synthetase BioD from Cyanothece sp. (strain PCC 7425 / ATCC 29141).